A 1062-amino-acid polypeptide reads, in one-letter code: MSTPSRFKKDKEIIAEYESQVKEIRAQLVEQQKCLEQQTEMRVQLLQDLQDFFRKKAEIETEYSRNLEKLAERFMAKTRSTKDHQQFKKDQNLLSPVNCWYLLLNQVRRESKDHATLSDIYLNNVIMRFMQISEDSTRMFKKSKEIAFQLHEDLMKVLNELYTVMKTYHMYHSESISAESKLKEAEKQEEKQIGRSGDPVFHIRLEERHQRRSSVKKIEKMKEKRQAKYSENKLKSIKARNEYLLTLEATNASVFKYYIHDLSDLIDCCDLGYHASLNRALRTYLSAEYNLETSRHEGLDIIENAVDNLEPRSDKQRFMEMYPAAFCPPMKFEFQSHMGDEVCQVSAQQPVQAELMLRNQQLQSRLATLKIESEEVKKTTEATLQTIQDMVTIEDYDVSECFQHSRSTESVKSTVSETYLSKPSIAKRRANQQETEQFYFMKLREFLEGSNLITKLQAKHDLLQRTLGEGHRAEYMTTSRGRRNSHARHQDSGQVIPLIVESCIRFINLYGLQHQGIFRVSGSQVEVNDIKNSFERGENPLSDEQSNHDINSVAGVLKLYFRGLENPLFPKERFTDLISCIRIDNLYERALHIRKLLLTLPRSVLIVMRYLFAFLNHLSQYSDENMMDPYNLAICFGPTLMPVPEIQDQVSCQAHVNEIVKTIIIHHETIFPDAKELDGPVYEKCMAGGDYCDSPYSEHGTLEEVDQDAGTEPHTSEDECEPIEAIAKFDYVGRSARELSFKKGASLLLYHRASEDWWEGRHNGIDGLVPHQYIVVQDMDDTFSDTLSQKADSEASSGPVTEDKSSSKDMNSPTDRHSDSYLARQRKRGEPPPPGRRPGRTSDGHCPLHPPHALSNSSIDLGSPNLASHPRGLLQNRGLNNDSPERRRRPGHGSLTNISRHDSLKKIDSPPIRRSTSSGQYTGFNDHKPLDPETIAQDIEETMNTALNELRELERQSTVKHAPDVVLDTLEQVKNSPTPATSTESLSPLHNVALRGSEPQIRRSTSSSSETMSTFKPMVAPRMGVQLKPPALRPKPAVLPKTNPTMGPAAPSQGPTDKSCTM.

The F-BAR domain occupies 19–314 (SQVKEIRAQL…AVDNLEPRSD (296 aa)). Positions 352 to 382 (QAELMLRNQQLQSRLATLKIESEEVKKTTEA) form a coiled coil. Ser416 carries the phosphoserine modification. The 191-residue stretch at 481 to 671 (GRRNSHARHQ…TIIIHHETIF (191 aa)) folds into the Rho-GAP domain. Positions 720–779 (CEPIEAIAKFDYVGRSARELSFKKGASLLLYHRASEDWWEGRHNGIDGLVPHQYIVVQDM) constitute an SH3 domain. Over residues 785-799 (DTLSQKADSEASSGP) the composition is skewed to polar residues. The segment at 785–931 (DTLSQKADSE…TGFNDHKPLD (147 aa)) is disordered. 2 positions are modified to phosphoserine: Ser812 and Ser894. A compositionally biased stretch (basic and acidic residues) spans 899–908 (SRHDSLKKID). A Phosphoserine modification is found at Ser909. Residues 914–923 (RSTSSGQYTG) are compositionally biased toward polar residues. The stretch at 933–960 (ETIAQDIEETMNTALNELRELERQSTVK) forms a coiled coil. The segment covering 974–988 (KNSPTPATSTESLSP) has biased composition (polar residues). Disordered stretches follow at residues 974-1013 (KNSP…ETMS) and 1028-1062 (KPPA…SCTM). A Phosphoserine modification is found at Ser976. The residue at position 978 (Thr978) is a Phosphothreonine. A compositionally biased stretch (low complexity) spans 1004–1013 (STSSSSETMS). Ser1009 is modified (phosphoserine). The span at 1053–1062 (QGPTDKSCTM) shows a compositional bias: polar residues.

Homodimer. Forms a heterooligomer with SRGAP2 and SRGAP3 through its F-BAR domain. Interacts with CDC42 and RHOA. Interacts with FASLG. Interacts (via SH3 domain) with ROBO1.

In terms of biological role, GTPase-activating protein for RhoA and Cdc42 small GTPases. Together with CDC42 seems to be involved in the pathway mediating the repulsive signaling of Robo and Slit proteins in neuronal migration. SLIT2, probably through interaction with ROBO1, increases the interaction of SRGAP1 with ROBO1 and inactivates CDC42. This chain is SLIT-ROBO Rho GTPase-activating protein 1 (Srgap1), found in Mus musculus (Mouse).